Consider the following 455-residue polypeptide: Gastric inhibitory polypeptide receptor (455 aa).

Positions 1 to 18 (MPLRLLLLLLWLWGLSLQ) are cleaved as a signal peptide. Residues 19–135 (RAETDSEGQT…DQKLILERLQ (117 aa)) are Extracellular-facing. Cystine bridges form between Cys43/Cys67, Cys58/Cys100, and Cys81/Cys115. N-linked (GlcNAc...) asparagine glycans are attached at residues Asn59, Asn69, and Asn74. The helical transmembrane segment at 136 to 158 (VVYTVGYSLSLATLLLALLILSL) threads the bilayer. Topologically, residues 159–166 (FRRLHCTR) are cytoplasmic. The chain crosses the membrane as a helical span at residues 167 to 186 (NYIHMNLFTSFMLRAGAILT). Over 187-214 (RDQLLPPLGPYTGNQTPTLWNQALAACR) the chain is Extracellular. The helical transmembrane segment at 215-239 (TAQILTQYCVGANYTWLLVEGVYLH) threads the bilayer. Residues 240–251 (HLLVVVRRSEKG) lie on the Cytoplasmic side of the membrane. Residues 252–275 (HFRCYLLLGWGAPALFVIPWVIVR) traverse the membrane as a helical segment. Residues 276–290 (YLYENTQCWERNEVK) lie on the Extracellular side of the membrane. A helical transmembrane segment spans residues 291–316 (AIWWIIRTPILITILINFLIFIRILG). The Cytoplasmic segment spans residues 317–338 (ILVSKLRTRQMRCPDYRLRLAR). The chain crosses the membrane as a helical span at residues 339–359 (STLTLMPLLGVHEVVFAPVTE). Residues 360 to 374 (EQAEGSLRFAKLAFE) lie on the Extracellular side of the membrane. Residues 375 to 395 (IFLSSFQGFLVSVLYCFINKE) form a helical membrane-spanning segment. Topologically, residues 396 to 455 (VQSEIRRLRLSLQEQCPRPHLGQAPRAVPLSSAPQEAAIRNALPSGMLHVPGDEVLESYC) are cytoplasmic.

The protein belongs to the G-protein coupled receptor 2 family. May form homodimers and heterodimers with GLP1R. In terms of processing, N-glycosylation is required for cell surface expression and lengthens receptor half-life by preventing degradation in the ER. As to expression, present in the pancreas as well as the gut, adipose tissue, heart, pituitary, and inner layers of the adrenal cortex, whereas it is not found in kidney, spleen, or liver. It is also expressed in several brain regions, including the cerebral cortex, hippocampus, and olfactory bulb.

It localises to the cell membrane. Functionally, this is a receptor for GIP. The activity of this receptor is mediated by G proteins which activate adenylyl cyclase. In Rattus norvegicus (Rat), this protein is Gastric inhibitory polypeptide receptor (Gipr).